Consider the following 228-residue polypeptide: Ribosomal RNA small subunit methyltransferase G (228 aa).

Residues Gly-89, Leu-94, 140 to 141, and Arg-159 contribute to the S-adenosyl-L-methionine site; that span reads VE.

This sequence belongs to the methyltransferase superfamily. RNA methyltransferase RsmG family.

The protein localises to the cytoplasm. It carries out the reaction guanosine(527) in 16S rRNA + S-adenosyl-L-methionine = N(7)-methylguanosine(527) in 16S rRNA + S-adenosyl-L-homocysteine. In terms of biological role, specifically methylates the N7 position of guanine in position 527 of 16S rRNA. The chain is Ribosomal RNA small subunit methyltransferase G from Burkholderia cenocepacia (strain ATCC BAA-245 / DSM 16553 / LMG 16656 / NCTC 13227 / J2315 / CF5610) (Burkholderia cepacia (strain J2315)).